The following is a 129-amino-acid chain: Small ribosomal subunit protein uS11 (129 aa).

The protein belongs to the universal ribosomal protein uS11 family. As to quaternary structure, part of the 30S ribosomal subunit. Interacts with proteins S7 and S18. Binds to IF-3.

In terms of biological role, located on the platform of the 30S subunit, it bridges several disparate RNA helices of the 16S rRNA. Forms part of the Shine-Dalgarno cleft in the 70S ribosome. The chain is Small ribosomal subunit protein uS11 from Haemophilus influenzae (strain ATCC 51907 / DSM 11121 / KW20 / Rd).